We begin with the raw amino-acid sequence, 35 residues long: Apolipophorin-3 (35 aa).

Equilibrium between a soluble monomer and a bound lipoprotein form. Apolipophorin-3 associates with lipophorin during lipid loading until each particle contains 9 or 14 molecules of apolipophorin-3. As to expression, hemolymph.

The protein resides in the secreted. In terms of biological role, assists in the loading of diacylglycerol, generated from triacylglycerol stores in the fat body through the action of adipokinetic hormone, into lipophorin, the hemolymph lipoprotein. It increases the lipid carrying capacity of lipophorin by covering the expanding hydrophobic surface resulting from diacylglycerol uptake. It thus plays a critical role in the transport of lipids during flight in several species of insects. Has hemagglutinating activity towards rabbit erythrocytes. The chain is Apolipophorin-3 from Heliothis virescens (Tobacco budworm moth).